A 1083-amino-acid polypeptide reads, in one-letter code: uncharacterized protein (1083 aa).

The tract at residues 93-145 (SKGNLRYVPTTSRNPSNTDTYSSSIDISSSSSSINTSDDSSGKTSSNDLSDMS) is disordered. Positions 108–145 (SNTDTYSSSIDISSSSSSINTSDDSSGKTSSNDLSDMS) are enriched in low complexity.

It is found in the virion. This is an uncharacterized protein from Acanthamoeba polyphaga (Amoeba).